Consider the following 461-residue polypeptide: Bifunctional protein GlmU (461 aa).

Residues 1 to 232 (MNLQIIILAA…SFEVQGINNR (232 aa)) are pyrophosphorylase. Residues 8-11 (LAAG), Lys22, Gln73, and 78-79 (GT) contribute to the UDP-N-acetyl-alpha-D-glucosamine site. A Mg(2+)-binding site is contributed by Asp102. Residues Gly142, Glu157, and Asn230 each contribute to the UDP-N-acetyl-alpha-D-glucosamine site. Asn230 provides a ligand contact to Mg(2+). Positions 233–253 (QQLQQLERIWQQRAANQLMEK) are linker. The tract at residues 254–461 (GVTLADANRF…WKRPAKRERD (208 aa)) is N-acetyltransferase. UDP-N-acetyl-alpha-D-glucosamine contacts are provided by Arg336 and Lys354. Residue His366 is the Proton acceptor of the active site. Residues Tyr369 and Asn380 each contribute to the UDP-N-acetyl-alpha-D-glucosamine site. Acetyl-CoA is bound by residues Ala383, 389 to 390 (NY), Ser408, and Ala426.

The protein in the N-terminal section; belongs to the N-acetylglucosamine-1-phosphate uridyltransferase family. This sequence in the C-terminal section; belongs to the transferase hexapeptide repeat family. As to quaternary structure, homotrimer. Mg(2+) is required as a cofactor.

The protein localises to the cytoplasm. The catalysed reaction is alpha-D-glucosamine 1-phosphate + acetyl-CoA = N-acetyl-alpha-D-glucosamine 1-phosphate + CoA + H(+). It catalyses the reaction N-acetyl-alpha-D-glucosamine 1-phosphate + UTP + H(+) = UDP-N-acetyl-alpha-D-glucosamine + diphosphate. The protein operates within nucleotide-sugar biosynthesis; UDP-N-acetyl-alpha-D-glucosamine biosynthesis; N-acetyl-alpha-D-glucosamine 1-phosphate from alpha-D-glucosamine 6-phosphate (route II): step 2/2. It participates in nucleotide-sugar biosynthesis; UDP-N-acetyl-alpha-D-glucosamine biosynthesis; UDP-N-acetyl-alpha-D-glucosamine from N-acetyl-alpha-D-glucosamine 1-phosphate: step 1/1. Its pathway is bacterial outer membrane biogenesis; LPS lipid A biosynthesis. Its function is as follows. Catalyzes the last two sequential reactions in the de novo biosynthetic pathway for UDP-N-acetylglucosamine (UDP-GlcNAc). The C-terminal domain catalyzes the transfer of acetyl group from acetyl coenzyme A to glucosamine-1-phosphate (GlcN-1-P) to produce N-acetylglucosamine-1-phosphate (GlcNAc-1-P), which is converted into UDP-GlcNAc by the transfer of uridine 5-monophosphate (from uridine 5-triphosphate), a reaction catalyzed by the N-terminal domain. The polypeptide is Bifunctional protein GlmU (Legionella pneumophila (strain Lens)).